Here is a 256-residue protein sequence, read N- to C-terminus: MTFISQVNKWFVNANVNSAAKLRLFCIPYAGGGASAFYEWSHFFPKEIEVCSIQLPGRENRGAEVPLTNLQQIVEIVAEEIQPLINIPFAFLGHSMGALISFELARTIRQKSNVNPVHLFVSGRHAPQIPCAKQDYHLLPDEQFIQELRSLNGTPEIVLQDAEMMSILLPRLRADFSVCGSYQYKNDEPFECPITAFGGKNDNGVTYQSLEAWREQTKREFSVCMYPGDHFFLYESKYEMIEFMCKQLRLVLAPKI.

Ser95 is an active-site residue.

This sequence belongs to the thioesterase family.

It functions in the pathway antibiotic biosynthesis; gramicidin S biosynthesis. In terms of biological role, probable thioesterase involved in the biosynthesis of gramicidin S. In Aneurinibacillus migulanus (Bacillus migulanus), this protein is Gramicidin S biosynthesis protein GrsT (grsT).